Reading from the N-terminus, the 500-residue chain is Prostacyclin synthase (500 aa).

A helical transmembrane segment spans residues 1 to 20 (MAWAALLGLLAALLLLLLLS). Residues Arg106, Leu112, Asn287, 358-359 (TR), and Arg382 each bind substrate. A heme-binding site is contributed by Cys441.

This sequence belongs to the cytochrome P450 family. Heme is required as a cofactor. Widely expressed; particularly abundant in ovary, heart, skeletal muscle, lung and prostate.

It localises to the endoplasmic reticulum membrane. The catalysed reaction is prostaglandin H2 = prostaglandin I2. It carries out the reaction a hydroperoxyeicosatetraenoate = an oxoeicosatetraenoate + H2O. It catalyses the reaction (15S)-hydroperoxy-(5Z,8Z,11Z,13E)-eicosatetraenoate = 15-oxo-(5Z,8Z,11Z,13E)-eicosatetraenoate + H2O. The enzyme catalyses (15S)-hydroperoxy-(5Z,8Z,11Z,13E)-eicosatetraenoate + AH2 = (15S)-hydroxy-(5Z,8Z,11Z,13E)-eicosatetraenoate + A + H2O. In terms of biological role, catalyzes the biosynthesis and metabolism of eicosanoids. Catalyzes the isomerization of prostaglandin H2 to prostacyclin (= prostaglandin I2), a potent mediator of vasodilation and inhibitor of platelet aggregation. Additionally, displays dehydratase activity, toward hydroperoxyeicosatetraenoates (HPETEs), especially toward (15S)-hydroperoxy-(5Z,8Z,11Z,13E)-eicosatetraenoate (15(S)-HPETE). The protein is Prostacyclin synthase (PTGIS) of Homo sapiens (Human).